We begin with the raw amino-acid sequence, 250 residues long: Carboxymethylproline synthase (250 aa).

60–64 lines the malonyl-CoA pocket; that stretch reads AGGDF.

The protein belongs to the enoyl-CoA hydratase/isomerase family. As to quaternary structure, homotrimer.

The enzyme catalyses (S)-1-pyrroline-5-carboxylate + malonyl-CoA + H2O + H(+) = (2S,5S)-5-carboxymethylproline + CO2 + CoA. It participates in antibiotic biosynthesis; carbapenem biosynthesis. In terms of biological role, catalyzes the formation of (2S,5S)-carboxymethylproline (t-CMP) from malonyl-CoA and (S)-1-pyrroline-5-carboxylate, the first step in the biosynthesis of (5R)-carbapen-2-em-3-carboxylate, a beta-lactam antibiotic of the carbapenem class. Also catalyzes the independent decarboxylation of malonyl-CoA and methylmalonyl-CoA and the hydrolysis of CoA esters such as acetyl-CoA and propionyl-CoA. Catalyzes the reaction with a C2 epimeric mixture of methylmalonyl-CoA to give a 55:45 mixture of (6R)- and (6S)-epimers of 6-methyl-t-CMP, under standard incubation conditions. The chain is Carboxymethylproline synthase from Pectobacterium carotovorum subsp. carotovorum (Erwinia carotovora subsp. carotovora).